Consider the following 258-residue polypeptide: Thiazole synthase 1 (258 aa).

Lys97 acts as the Schiff-base intermediate with DXP in catalysis. Residues Gly158, 184–185 (AG), and 206–207 (NT) contribute to the 1-deoxy-D-xylulose 5-phosphate site.

It belongs to the ThiG family. In terms of assembly, homotetramer. Forms heterodimers with either ThiH or ThiS.

The protein resides in the cytoplasm. It carries out the reaction [ThiS sulfur-carrier protein]-C-terminal-Gly-aminoethanethioate + 2-iminoacetate + 1-deoxy-D-xylulose 5-phosphate = [ThiS sulfur-carrier protein]-C-terminal Gly-Gly + 2-[(2R,5Z)-2-carboxy-4-methylthiazol-5(2H)-ylidene]ethyl phosphate + 2 H2O + H(+). It functions in the pathway cofactor biosynthesis; thiamine diphosphate biosynthesis. In terms of biological role, catalyzes the rearrangement of 1-deoxy-D-xylulose 5-phosphate (DXP) to produce the thiazole phosphate moiety of thiamine. Sulfur is provided by the thiocarboxylate moiety of the carrier protein ThiS. In vitro, sulfur can be provided by H(2)S. This is Thiazole synthase 1 from Syntrophotalea carbinolica (strain DSM 2380 / NBRC 103641 / GraBd1) (Pelobacter carbinolicus).